The sequence spans 547 residues: Chaperonin GroEL (547 aa).

ATP is bound by residues 30 to 33 (TLGP), Lys-51, 87 to 91 (DGTTT), Gly-415, and Asp-496. A disordered region spans residues 527-547 (KKDSPAMPGGGGMGGMGGMDF). Positions 534-547 (PGGGGMGGMGGMDF) are enriched in gly residues.

Belongs to the chaperonin (HSP60) family. As to quaternary structure, forms a cylinder of 14 subunits composed of two heptameric rings stacked back-to-back. Interacts with the co-chaperonin GroES.

The protein localises to the cytoplasm. The enzyme catalyses ATP + H2O + a folded polypeptide = ADP + phosphate + an unfolded polypeptide.. Together with its co-chaperonin GroES, plays an essential role in assisting protein folding. The GroEL-GroES system forms a nano-cage that allows encapsulation of the non-native substrate proteins and provides a physical environment optimized to promote and accelerate protein folding. The chain is Chaperonin GroEL from Methylocella silvestris (strain DSM 15510 / CIP 108128 / LMG 27833 / NCIMB 13906 / BL2).